A 151-amino-acid polypeptide reads, in one-letter code: Aspartate carbamoyltransferase regulatory chain (151 aa).

Positions 108, 113, 136, and 139 each coordinate Zn(2+).

The protein belongs to the PyrI family. In terms of assembly, contains catalytic and regulatory chains. The cofactor is Zn(2+).

Involved in allosteric regulation of aspartate carbamoyltransferase. The chain is Aspartate carbamoyltransferase regulatory chain from Porphyromonas gingivalis (strain ATCC 33277 / DSM 20709 / CIP 103683 / JCM 12257 / NCTC 11834 / 2561).